The primary structure comprises 427 residues: Serine--tRNA ligase (427 aa).

231–233 (TAE) provides a ligand contact to L-serine. Residue 262 to 264 (RSE) coordinates ATP. E285 serves as a coordination point for L-serine. 349–352 (EISS) is a binding site for ATP. An L-serine-binding site is contributed by S385.

Belongs to the class-II aminoacyl-tRNA synthetase family. Type-1 seryl-tRNA synthetase subfamily. As to quaternary structure, homodimer. The tRNA molecule binds across the dimer.

The protein resides in the cytoplasm. It catalyses the reaction tRNA(Ser) + L-serine + ATP = L-seryl-tRNA(Ser) + AMP + diphosphate + H(+). The catalysed reaction is tRNA(Sec) + L-serine + ATP = L-seryl-tRNA(Sec) + AMP + diphosphate + H(+). Its pathway is aminoacyl-tRNA biosynthesis; selenocysteinyl-tRNA(Sec) biosynthesis; L-seryl-tRNA(Sec) from L-serine and tRNA(Sec): step 1/1. In terms of biological role, catalyzes the attachment of serine to tRNA(Ser). Is also able to aminoacylate tRNA(Sec) with serine, to form the misacylated tRNA L-seryl-tRNA(Sec), which will be further converted into selenocysteinyl-tRNA(Sec). The sequence is that of Serine--tRNA ligase from Listeria welshimeri serovar 6b (strain ATCC 35897 / DSM 20650 / CCUG 15529 / CIP 8149 / NCTC 11857 / SLCC 5334 / V8).